The sequence spans 351 residues: Biotin synthase (351 aa).

Residues 44 to 262 (NRVQVSTLLS…LAVARIMMPK (219 aa)) enclose the Radical SAM core domain. The [4Fe-4S] cluster site is built by Cys59, Cys63, and Cys66. 4 residues coordinate [2Fe-2S] cluster: Cys103, Cys134, Cys194, and Arg266.

The protein belongs to the radical SAM superfamily. Biotin synthase family. Homodimer. Requires [4Fe-4S] cluster as cofactor. It depends on [2Fe-2S] cluster as a cofactor.

It catalyses the reaction (4R,5S)-dethiobiotin + (sulfur carrier)-SH + 2 reduced [2Fe-2S]-[ferredoxin] + 2 S-adenosyl-L-methionine = (sulfur carrier)-H + biotin + 2 5'-deoxyadenosine + 2 L-methionine + 2 oxidized [2Fe-2S]-[ferredoxin]. It functions in the pathway cofactor biosynthesis; biotin biosynthesis; biotin from 7,8-diaminononanoate: step 2/2. Its function is as follows. Catalyzes the conversion of dethiobiotin (DTB) to biotin by the insertion of a sulfur atom into dethiobiotin via a radical-based mechanism. The chain is Biotin synthase from Stutzerimonas stutzeri (strain A1501) (Pseudomonas stutzeri).